Consider the following 201-residue polypeptide: Inner membrane protein YnbA (201 aa).

Residues 1–43 lie on the Periplasmic side of the membrane; sequence MTLYQIKPLFQSLLRPTMFWLYKHHVTANHITLAALALSLLTG. The chain crosses the membrane as a helical span at residues 44-64; the sequence is LLLMLAAQPILFLLLPIVLFI. Over 65 to 84 the chain is Cytoplasmic; sequence RMALNALDGMLARECNQQTR. Residues 85–107 traverse the membrane as a helical segment; sequence LGAILNETGDVISDIALYLPFLF. Residues 108–116 lie on the Periplasmic side of the membrane; sequence LPESNASLV. Residues 117–139 form a helical membrane-spanning segment; the sequence is ILMLFCTILTEFCGLLAQTINGV. Residues 140–151 lie on the Cytoplasmic side of the membrane; the sequence is RSYAGPFGKSDR. A helical transmembrane segment spans residues 152-172; sequence ALIFGLWGLAVAIYPQWMQWN. Over 173-175 the chain is Periplasmic; sequence NLL. Residues 176–196 form a helical membrane-spanning segment; it reads WSIASILLLWTAINRCRSVLL. Topologically, residues 197–201 are cytoplasmic; it reads MSAEI.

It is found in the cell inner membrane. The polypeptide is Inner membrane protein YnbA (ynbA) (Escherichia coli (strain K12)).